The sequence spans 244 residues: 5-oxoprolinase subunit A (244 aa).

The protein belongs to the LamB/PxpA family. In terms of assembly, forms a complex composed of PxpA, PxpB and PxpC.

The catalysed reaction is 5-oxo-L-proline + ATP + 2 H2O = L-glutamate + ADP + phosphate + H(+). Catalyzes the cleavage of 5-oxoproline to form L-glutamate coupled to the hydrolysis of ATP to ADP and inorganic phosphate. In Salmonella typhimurium (strain LT2 / SGSC1412 / ATCC 700720), this protein is 5-oxoprolinase subunit A.